The sequence spans 917 residues: Spermatogenesis-associated protein 31D4 (917 aa).

A helical membrane pass occupies residues 29–49 (FICLSGLGLFILYLFYMVLTL). Disordered stretches follow at residues 55-80 (EKNN…KDRK), 152-195 (SVSP…PPPL), and 773-798 (SQET…RSNS). The segment covering 63–74 (HQGRARRKRKSV) has biased composition (basic residues). The segment covering 152–163 (SVSPLASSASGA) has biased composition (low complexity). A compositionally biased stretch (polar residues) spans 164 to 177 (ESSFTLASTPSATT). Over residues 782 to 798 (LLHDPETSSDEDLRSNS) the composition is skewed to basic and acidic residues.

This sequence belongs to the SPATA31 family.

It localises to the membrane. In terms of biological role, may play a role in spermatogenesis. The protein is Spermatogenesis-associated protein 31D4 (SPATA31D4) of Homo sapiens (Human).